Reading from the N-terminus, the 269-residue chain is MPILTTHLLQDVIEIAQQAGEHLRCFYQRSVTVRMKEDNTPVTEADLFVSQFLTEKLTALTPQIPILSEENCHIPLTERQTWRSYWLIDPLDGTQQFINRTGQFSVLVSLVKDHQPVLGVIHAPMLGSTYYAMQGFGAYKHHDGQHLKLAFHDIQADNALRIAVGSAAAAEKVRSILNKNLAYEFHICGSSGLKSTLVADGVCDCYIRLGCTGEWDTAASEILLAEMGGIIFDLNYQPLTYNKRESFVNPNFVMGITQDFPWDKIFHSN.

Mg(2+) is bound by residues E69, D89, L91, D92, and D216. E69 serves as a coordination point for substrate. Substrate-binding positions include 91–94 (LDGT) and D216.

Belongs to the inositol monophosphatase superfamily. CysQ family. It depends on Mg(2+) as a cofactor.

It is found in the cell inner membrane. The catalysed reaction is adenosine 3',5'-bisphosphate + H2O = AMP + phosphate. Its function is as follows. Converts adenosine-3',5'-bisphosphate (PAP) to AMP. The chain is 3'(2'),5'-bisphosphate nucleotidase CysQ from Aggregatibacter actinomycetemcomitans (Actinobacillus actinomycetemcomitans).